Consider the following 232-residue polypeptide: tRNA (guanine-N(1)-)-methyltransferase (232 aa).

Residues G111 and 131–136 (IGDYIL) contribute to the S-adenosyl-L-methionine site.

This sequence belongs to the RNA methyltransferase TrmD family. As to quaternary structure, homodimer.

It localises to the cytoplasm. The enzyme catalyses guanosine(37) in tRNA + S-adenosyl-L-methionine = N(1)-methylguanosine(37) in tRNA + S-adenosyl-L-homocysteine + H(+). Its function is as follows. Specifically methylates guanosine-37 in various tRNAs. This Bartonella henselae (strain ATCC 49882 / DSM 28221 / CCUG 30454 / Houston 1) (Rochalimaea henselae) protein is tRNA (guanine-N(1)-)-methyltransferase.